The sequence spans 491 residues: Aspartyl/glutamyl-tRNA(Asn/Gln) amidotransferase subunit B (491 aa).

The protein belongs to the GatB/GatE family. GatB subfamily. As to quaternary structure, heterotrimer of A, B and C subunits.

It carries out the reaction L-glutamyl-tRNA(Gln) + L-glutamine + ATP + H2O = L-glutaminyl-tRNA(Gln) + L-glutamate + ADP + phosphate + H(+). The catalysed reaction is L-aspartyl-tRNA(Asn) + L-glutamine + ATP + H2O = L-asparaginyl-tRNA(Asn) + L-glutamate + ADP + phosphate + 2 H(+). Allows the formation of correctly charged Asn-tRNA(Asn) or Gln-tRNA(Gln) through the transamidation of misacylated Asp-tRNA(Asn) or Glu-tRNA(Gln) in organisms which lack either or both of asparaginyl-tRNA or glutaminyl-tRNA synthetases. The reaction takes place in the presence of glutamine and ATP through an activated phospho-Asp-tRNA(Asn) or phospho-Glu-tRNA(Gln). The polypeptide is Aspartyl/glutamyl-tRNA(Asn/Gln) amidotransferase subunit B (Trichormus variabilis (strain ATCC 29413 / PCC 7937) (Anabaena variabilis)).